We begin with the raw amino-acid sequence, 365 residues long: Aminotransferase poxL (365 aa).

Residue Arg-92 participates in pyridoxal 5'-phosphate binding. N6-(pyridoxal phosphate)lysine is present on Lys-193. A pyridoxal 5'-phosphate-binding site is contributed by Glu-229.

It belongs to the class-IV pyridoxal-phosphate-dependent aminotransferase family. Pyridoxal 5'-phosphate is required as a cofactor.

The protein operates within secondary metabolite biosynthesis. In terms of biological role, aminotransferase; part of the gene cluster that mediates the biosynthesis of oxaleimides, cytotoxic compounds containing an unusual disubstituted succinimide moiety. The first step of the pathway is provided by the HR-PKS poxF that serves in a new mode of collaborative biosynthesis with the PKS-NRPS poxE, by providing the olefin containing amino acid substrate via the synthesis of an ACP-bound dec-4-enoate. The cytochrome P450 monooxygenase poxM-catalyzed oxidation at the alpha-position creates the enzyme-bound 2-hydroxydec-4-enoyl-ACP thioester, which may be prone to spontaneous hydrolysis to yield 2-hydroxydec-4-enoic acid due to increased electrophilicity of the carbonyl. 2-hydroxydec-4-enoic acid can then be further oxidized by poxM to yield the alpha-ketoacid 2-oxodec-4-enoicacid, which is reductively aminated by the aminotransferase poxL to yield (S,E)-2-aminodec-4-enoic acid. The Hybrid PKS-NRPS synthetase poxE then performs condensation between the octaketide product of its PKS modules and the amino group of (S,E)-2-aminodec-4-enoic acid which is activated and incorporated by the adenylation domain. The resulting aminoacyl product can be cyclized by the Diels-Alderase PoxQ and reductively released by the reductive (R) domain of poxE to yield an aldehyde intermediate. The released aldehyde is then substrate for a Knoevenagel condensation by the hydrolyase poxO followed by an oxidation at the 5-position of the pyrrolidone ring. The presence of the olefin from the amino acid building block allows for migration of the substituted allyl group to occur. This allylic transposition reaction takes place in a conjugate addition, semipinacol-like fashion to yield a succinimide intermediate. Iterative two-electron oxidations of the C7 methyl of the succinimide intermediate to the carboxylic acid can be catalyzed by one of two remaining cytochrome P450 monooxygenasess poxC or poxD to yield oxaleimide A. Subsequent oxidation yields the maleimide scaffold oxaleimide I. Both oxaleimide A and oxaleimide I can undergo oxidative modifications in the decalin ring to yield the series of products oxaleimides B to H. The sequence is that of Aminotransferase poxL from Penicillium oxalicum (strain 114-2 / CGMCC 5302) (Penicillium decumbens).